A 678-amino-acid chain; its full sequence is Methionine--tRNA ligase (678 aa).

Positions 14–24 (PYANGSIHLGH) match the 'HIGH' region motif. 4 residues coordinate Zn(2+): C145, C148, C158, and C161. A 'KMSKS' region motif is present at residues 331–335 (KMSKS). Residue K334 participates in ATP binding. The region spanning 576-678 (AFAAVDLRIA…SGAKPGQRVK (103 aa)) is the tRNA-binding domain.

The protein belongs to the class-I aminoacyl-tRNA synthetase family. MetG type 1 subfamily. Homodimer. Requires Zn(2+) as cofactor.

The protein localises to the cytoplasm. The enzyme catalyses tRNA(Met) + L-methionine + ATP = L-methionyl-tRNA(Met) + AMP + diphosphate. Its function is as follows. Is required not only for elongation of protein synthesis but also for the initiation of all mRNA translation through initiator tRNA(fMet) aminoacylation. This Ectopseudomonas mendocina (strain ymp) (Pseudomonas mendocina) protein is Methionine--tRNA ligase.